A 383-amino-acid chain; its full sequence is Na(+)/H(+) antiporter NhaA (383 aa).

11 helical membrane passes run Leu10–Pro30, Leu56–Ile76, Ile91–Ser111, Gly121–Gly141, Leu150–Phe170, Ser174–Asn194, Val206–Ala226, Pro254–Ser274, Ile289–Phe308, Gly327–Phe347, and Ala355–Leu375.

This sequence belongs to the NhaA Na(+)/H(+) (TC 2.A.33) antiporter family.

Its subcellular location is the cell inner membrane. The enzyme catalyses Na(+)(in) + 2 H(+)(out) = Na(+)(out) + 2 H(+)(in). In terms of biological role, na(+)/H(+) antiporter that extrudes sodium in exchange for external protons. This is Na(+)/H(+) antiporter NhaA from Francisella tularensis subsp. holarctica (strain FTNF002-00 / FTA).